We begin with the raw amino-acid sequence, 429 residues long: Bifunctional protein GlmU (429 aa).

The segment at 1–223 (MKISVLILAA…EQDFMGVNDK (223 aa)) is pyrophosphorylase. UDP-N-acetyl-alpha-D-glucosamine is bound by residues 8 to 11 (LAAG), Lys22, Gln74, and 81 to 82 (GT). Residue Asp102 coordinates Mg(2+). Gly135, Glu149, Asn164, and Asn221 together coordinate UDP-N-acetyl-alpha-D-glucosamine. Mg(2+) is bound at residue Asn221. The interval 224-244 (IELCLAQDLMQEAIKKEWMKQ) is linker. The N-acetyltransferase stretch occupies residues 245–429 (GVIFHMPATT…KDYFYTKFKK (185 aa)). Residues Arg308 and Lys325 each coordinate UDP-N-acetyl-alpha-D-glucosamine. The active-site Proton acceptor is His336. UDP-N-acetyl-alpha-D-glucosamine-binding residues include Tyr339 and Asn350. Acetyl-CoA is bound by residues 359 to 360 (NY), Ser378, Ala396, and Arg413.

It in the N-terminal section; belongs to the N-acetylglucosamine-1-phosphate uridyltransferase family. The protein in the C-terminal section; belongs to the transferase hexapeptide repeat family. Homotrimer. The cofactor is Mg(2+).

It localises to the cytoplasm. It carries out the reaction alpha-D-glucosamine 1-phosphate + acetyl-CoA = N-acetyl-alpha-D-glucosamine 1-phosphate + CoA + H(+). The catalysed reaction is N-acetyl-alpha-D-glucosamine 1-phosphate + UTP + H(+) = UDP-N-acetyl-alpha-D-glucosamine + diphosphate. The protein operates within nucleotide-sugar biosynthesis; UDP-N-acetyl-alpha-D-glucosamine biosynthesis; N-acetyl-alpha-D-glucosamine 1-phosphate from alpha-D-glucosamine 6-phosphate (route II): step 2/2. Its pathway is nucleotide-sugar biosynthesis; UDP-N-acetyl-alpha-D-glucosamine biosynthesis; UDP-N-acetyl-alpha-D-glucosamine from N-acetyl-alpha-D-glucosamine 1-phosphate: step 1/1. It functions in the pathway bacterial outer membrane biogenesis; LPS lipid A biosynthesis. In terms of biological role, catalyzes the last two sequential reactions in the de novo biosynthetic pathway for UDP-N-acetylglucosamine (UDP-GlcNAc). The C-terminal domain catalyzes the transfer of acetyl group from acetyl coenzyme A to glucosamine-1-phosphate (GlcN-1-P) to produce N-acetylglucosamine-1-phosphate (GlcNAc-1-P), which is converted into UDP-GlcNAc by the transfer of uridine 5-monophosphate (from uridine 5-triphosphate), a reaction catalyzed by the N-terminal domain. The chain is Bifunctional protein GlmU from Campylobacter lari (strain RM2100 / D67 / ATCC BAA-1060).